A 471-amino-acid polypeptide reads, in one-letter code: Glutamate--tRNA ligase (471 aa).

A 'HIGH' region motif is present at residues 10–20; that stretch reads PSPTGFLHIGG. Residues 117 to 137 are disordered; sequence GRPPRYDGRWRDRPASERPTD. The 'KMSKS' region motif lies at 239–243; that stretch reads KLSKR. K242 provides a ligand contact to ATP.

The protein belongs to the class-I aminoacyl-tRNA synthetase family. Glutamate--tRNA ligase type 1 subfamily. In terms of assembly, monomer.

Its subcellular location is the cytoplasm. It carries out the reaction tRNA(Glu) + L-glutamate + ATP = L-glutamyl-tRNA(Glu) + AMP + diphosphate. Its function is as follows. Catalyzes the attachment of glutamate to tRNA(Glu) in a two-step reaction: glutamate is first activated by ATP to form Glu-AMP and then transferred to the acceptor end of tRNA(Glu). The protein is Glutamate--tRNA ligase of Azorhizobium caulinodans (strain ATCC 43989 / DSM 5975 / JCM 20966 / LMG 6465 / NBRC 14845 / NCIMB 13405 / ORS 571).